The sequence spans 737 residues: MIVRNEPPITPELVASHGLKPDEYERILKLLGRTPTFTELGIFSAMWNEHCSYKSSRIHLRGLPTKAPWVIQGPGENAGVIDIGDGQAVVFKMESHNHPSYIEPYQGATTGVGGILRDVFTMGARPIACLNALSFGDPSHPKTRHLVSGVVAGVGGYGNSFGVPTVGGQVRFHTRYDGNILVNAMAVGLADADRIFYAAASGVNMPIVYLGSKTGRDGIHGATMASAEFDDDSEEKRPTVQVGDPFAEKLLLEACLEIMAKGCVVAIQDMGAAGLTCSAVEMGAKGDLGVDLDLDSVPTRETGMSAYEMMLSESQERMLMVLKPEKEKEAEAIFRKWGLDFAIVGSTTPGRRFVVRHGGDVMADLPIKELESEAPLYDRPHVPSPQLPVIQARDVAPSLTTADALEKLLAMPELCSKRWVWEQYDHVIGGNTVQRPGGDAAVVRVEDGPKGLALTVDVTPRYCEADPFEGGKQAVAEAWRNITAVGGRPLAITDNLNFGNPERPENMGQFVGCLKGIAAACTALDFPVVSGNVSLYNETNGRGILPTPTIGGVGLLDDFTKSASLAFKAEGHPILLIGDTQGWLGQSVYLRDICRREEGAPPPVDLAAEKRNGDVVRGMIHAGTATAVHDVSDGGLLVALAEMAMADGIGAALDAAPAAIVPYAWWFGEDQARYIVTVHERDLLSVFTKLKAVNVPCIQIGLTGGHEIAIAGERAVDLKVLRQGFESWLPDYMAGKP.

His50 is a catalytic residue. Residues Tyr53 and Lys92 each coordinate ATP. Glu94 contributes to the Mg(2+) binding site. Residues Ser95–His98 and Arg117 each bind substrate. His96 functions as the Proton acceptor in the catalytic mechanism. Asp118 is a Mg(2+) binding site. Gln241 is a binding site for substrate. Position 269 (Asp269) interacts with Mg(2+). A substrate-binding site is contributed by Glu313–Gln315. Residues Asp494 and Gly531 each contribute to the ATP site. A Mg(2+)-binding site is contributed by Asn532. Substrate is bound at residue Ser534.

Belongs to the FGAMS family. In terms of assembly, monomer. Part of the FGAM synthase complex composed of 1 PurL, 1 PurQ and 2 PurS subunits.

Its subcellular location is the cytoplasm. It catalyses the reaction N(2)-formyl-N(1)-(5-phospho-beta-D-ribosyl)glycinamide + L-glutamine + ATP + H2O = 2-formamido-N(1)-(5-O-phospho-beta-D-ribosyl)acetamidine + L-glutamate + ADP + phosphate + H(+). The protein operates within purine metabolism; IMP biosynthesis via de novo pathway; 5-amino-1-(5-phospho-D-ribosyl)imidazole from N(2)-formyl-N(1)-(5-phospho-D-ribosyl)glycinamide: step 1/2. Part of the phosphoribosylformylglycinamidine synthase complex involved in the purines biosynthetic pathway. Catalyzes the ATP-dependent conversion of formylglycinamide ribonucleotide (FGAR) and glutamine to yield formylglycinamidine ribonucleotide (FGAM) and glutamate. The FGAM synthase complex is composed of three subunits. PurQ produces an ammonia molecule by converting glutamine to glutamate. PurL transfers the ammonia molecule to FGAR to form FGAM in an ATP-dependent manner. PurS interacts with PurQ and PurL and is thought to assist in the transfer of the ammonia molecule from PurQ to PurL. This chain is Phosphoribosylformylglycinamidine synthase subunit PurL, found in Nitrobacter winogradskyi (strain ATCC 25391 / DSM 10237 / CIP 104748 / NCIMB 11846 / Nb-255).